The following is a 265-amino-acid chain: DNA repair protein RecO (265 aa).

This sequence belongs to the RecO family.

Functionally, involved in DNA repair and RecF pathway recombination. The polypeptide is DNA repair protein RecO (Mycobacterium ulcerans (strain Agy99)).